The following is a 517-amino-acid chain: Beta-glucosidase 17 (517 aa).

Positions 1–23 are cleaved as a signal peptide; the sequence is MAIKSIFIIIIISIITSISELYA. A beta-D-glucoside is bound by residues glutamine 54, histidine 158, and 203-204; that span reads NE. Glutamate 204 serves as the catalytic Proton donor. Cysteine 223 and cysteine 230 are oxidised to a cystine. A glycan (N-linked (GlcNAc...) asparagine) is linked at asparagine 229. A beta-D-glucoside is bound at residue tyrosine 346. N-linked (GlcNAc...) asparagine glycans are attached at residues asparagine 361 and asparagine 371. A beta-D-glucoside is bound by residues glutamate 417, tryptophan 466, 473–474, and tyrosine 482; that span reads EW. The active-site Nucleophile is glutamate 417. N-linked (GlcNAc...) asparagine glycosylation is present at asparagine 510.

The protein belongs to the glycosyl hydrolase 1 family.

It carries out the reaction Hydrolysis of terminal, non-reducing beta-D-glucosyl residues with release of beta-D-glucose.. This is Beta-glucosidase 17 from Arabidopsis thaliana (Mouse-ear cress).